A 223-amino-acid polypeptide reads, in one-letter code: Translation initiation factor 6 (223 aa).

The protein belongs to the eIF-6 family.

Binds to the 50S ribosomal subunit and prevents its association with the 30S ribosomal subunit to form the 70S initiation complex. The polypeptide is Translation initiation factor 6 (Saccharolobus islandicus (strain M.16.27) (Sulfolobus islandicus)).